We begin with the raw amino-acid sequence, 352 residues long: C-C chemokine receptor type 5 (352 aa).

The Extracellular segment spans residues 1-30 (MDYQVSSPIYDINYYTSEPCQKINVKQIAA). Tyr-3 carries the sulfotyrosine modification. Residues Ser-6 and Ser-7 are each glycosylated (O-linked (GalNAc...) serine). Residues Tyr-10, Tyr-14, and Tyr-15 each carry the sulfotyrosine modification. 2 cysteine pairs are disulfide-bonded: Cys-20-Cys-269 and Cys-101-Cys-178. A helical membrane pass occupies residues 31–58 (RLLPPLYSLVFIFGFVGNMLVILILINC). At 59-68 (KRLKSMTDIY) the chain is on the cytoplasmic side. The helical transmembrane segment at 69 to 89 (LLNLAISDLFFLLTVPFWAHY) threads the bilayer. Residues 90–102 (AAAQWDFGNTMCQ) are Extracellular-facing. Residues 103–124 (LLTGLYFIGFFSGIFFIILLTI) traverse the membrane as a helical segment. Over 125–141 (DRYLAVVHAVFALKART) the chain is Cytoplasmic. The helical transmembrane segment at 142 to 166 (VTFGVVTSVITWVVAVFASLPGIIF) threads the bilayer. Residues 167–198 (TRSQKEGLHYTCSSHFPYSQYQFWKNFQTLKI) lie on the Extracellular side of the membrane. Residues 199-218 (VILGLVLPLLVMVICYSGIL) traverse the membrane as a helical segment. At 219–235 (KTLLRCRNEKKRHRAVR) the chain is on the cytoplasmic side. Residues 236–260 (LIFTIMIVYFLFWAPYNIVLLLNTF) form a helical membrane-spanning segment. Residues 261-277 (QEFFGLNNCSSSNRLDQ) are Extracellular-facing. A helical transmembrane segment spans residues 278–301 (AMQVTETLGMTHCCINPIIYAFVG). Over 302–352 (EKFRNYLLVFFQKHIAKRFCKCCSIFQQEAPERASSVYTRSTGEQEISVGL) the chain is Cytoplasmic. S-palmitoyl cysteine attachment occurs at residues Cys-321, Cys-323, and Cys-324. Residues Ser-336, Ser-337, Ser-342, and Ser-349 each carry the phosphoserine; by BARK1 modification.

This sequence belongs to the G-protein coupled receptor 1 family. As to quaternary structure, interacts with PRAF2. Efficient ligand binding to CCL3/MIP-1alpha and CCL4/MIP-1beta requires sulfation, O-glycosylation and sialic acid modifications. Glycosylation on Ser-6 is required for efficient binding of CCL4. Interacts with GRK2. Interacts with ARRB1 and ARRB2. Interacts with CNIH4. Interacts with S100A4; this interaction stimulates T-lymphocyte chemotaxis. In terms of assembly, (Microbial infection) Interacts with HIV-1 surface protein gp120. (Microbial infection) May interact with human cytomegalovirus/HHV-5 protein UL78. In terms of processing, sulfated on at least 2 of the N-terminal tyrosines. Sulfation contributes to the efficiency of HIV-1 entry and is required for efficient binding of the chemokines, CCL3 and CCL4. Post-translationally, O-glycosylated, but not N-glycosylated. Ser-6 appears to be the major site even if Ser-7 may be also O-glycosylated. Also sialylated glycans present which contribute to chemokine binding. Thr-16 and Ser-17 may also be glycosylated and, if so, with small moieties such as a T-antigen. Palmitoylation in the C-terminal is important for cell surface expression, and to a lesser extent, for HIV entry. In terms of processing, phosphorylation on serine residues in the C-terminal is stimulated by binding CC chemokines especially by APO-RANTES. In terms of tissue distribution, highly expressed in spleen, thymus, in the myeloid cell line THP-1, in the promyeloblastic cell line KG-1a and on CD4+ and CD8+ T-cells. Medium levels in peripheral blood leukocytes and in small intestine. Low levels in ovary and lung.

The protein resides in the cell membrane. In terms of biological role, receptor for a number of inflammatory CC-chemokines including CCL3/MIP-1-alpha, CCL4/MIP-1-beta and RANTES and subsequently transduces a signal by increasing the intracellular calcium ion level. May play a role in the control of granulocytic lineage proliferation or differentiation. Participates in T-lymphocyte migration to the infection site by acting as a chemotactic receptor. (Microbial infection) Acts as a coreceptor (CD4 being the primary receptor) of human immunodeficiency virus-1/HIV-1. The sequence is that of C-C chemokine receptor type 5 from Homo sapiens (Human).